Consider the following 332-residue polypeptide: DNA-directed RNA polymerase subunit alpha (332 aa).

An alpha N-terminal domain (alpha-NTD) region spans residues 1 to 234 (MTVTISQVLR…DQLSVFGDFT (234 aa)). The alpha C-terminal domain (alpha-CTD) stretch occupies residues 248–332 (VDPVLLRPID…PGVSQYGMLG (85 aa)).

It belongs to the RNA polymerase alpha chain family. Homodimer. The RNAP catalytic core consists of 2 alpha, 1 beta, 1 beta' and 1 omega subunit. When a sigma factor is associated with the core the holoenzyme is formed, which can initiate transcription.

It carries out the reaction RNA(n) + a ribonucleoside 5'-triphosphate = RNA(n+1) + diphosphate. In terms of biological role, DNA-dependent RNA polymerase catalyzes the transcription of DNA into RNA using the four ribonucleoside triphosphates as substrates. The sequence is that of DNA-directed RNA polymerase subunit alpha from Xylella fastidiosa (strain M12).